The following is an 808-amino-acid chain: Enhancer of polycomb homolog 2 (808 aa).

Glycyl lysine isopeptide (Lys-Gly) (interchain with G-Cter in SUMO2) cross-links involve residues Lys135, Lys195, and Lys324. Positions 337–357 (YPKKPKAEAGIAPQQPTPETL) are disordered. Lys362 participates in a covalent cross-link: Glycyl lysine isopeptide (Lys-Gly) (interchain with G-Cter in SUMO2). 3 disordered regions span residues 371–397 (QSSD…PDGS), 595–630 (QRQQ…CMSK), and 645–682 (VSAP…LYST). A compositionally biased stretch (low complexity) spans 595–614 (QRQQLAQLHQKQQSQHSSQQ). 2 stretches are compositionally biased toward polar residues: residues 615–630 (THPK…CMSK) and 658–682 (EQNT…LYST). Ser755 bears the Phosphoserine mark.

This sequence belongs to the enhancer of polycomb family.

The protein localises to the nucleus. In terms of biological role, may play a role in transcription or DNA repair. The protein is Enhancer of polycomb homolog 2 (Epc2) of Mus musculus (Mouse).